The sequence spans 201 residues: Small ribosomal subunit protein uS10m (201 aa).

This sequence belongs to the universal ribosomal protein uS10 family. Component of the mitochondrial ribosome small subunit (28S) which comprises a 12S rRNA and about 30 distinct proteins.

It is found in the mitochondrion. This is Small ribosomal subunit protein uS10m (MRPS10) from Pongo abelii (Sumatran orangutan).